Reading from the N-terminus, the 164-residue chain is MTHDKTCPCGSPKIYQDCCQILHLGLDSGAQLATSPEQLMRSRYCAFVLKNFDYIIKTHHAAYLDGLTLEQLQQGPHPEWLGLDVLSANDTTQPDGSKFGTVTFKAWYKMSGEIDAIYERSEFIFEQGRWFYTKGHQMHAKLPGRNDPCVCHSGKKFKQCCMKG.

This sequence belongs to the UPF0225 family.

The sequence is that of UPF0225 protein Shewana3_2159 from Shewanella sp. (strain ANA-3).